Here is a 119-residue protein sequence, read N- to C-terminus: UPF0145 protein Ta0182 (119 aa).

The protein belongs to the UPF0145 family.

This chain is UPF0145 protein Ta0182, found in Thermoplasma acidophilum (strain ATCC 25905 / DSM 1728 / JCM 9062 / NBRC 15155 / AMRC-C165).